The sequence spans 418 residues: Actin-related protein 3 (418 aa).

Position 2 is an N-acetylalanine (alanine 2). 4 positions are modified to N6-acetyllysine: lysine 240, lysine 244, lysine 251, and lysine 254.

The protein belongs to the actin family. ARP3 subfamily. As to quaternary structure, component of the Arp2/3 complex composed of ACTR2/ARP2, ACTR3/ARP3, ARPC1B/p41-ARC, ARPC2/p34-ARC, ARPC3/p21-ARC, ARPC4/p20-ARC and ARPC5/p16-ARC. Interacts with WHDC1. Interacts weakly with MEFV. Interacts with AVIL.

The protein localises to the cytoplasm. It is found in the cytoskeleton. It localises to the cell projection. Its subcellular location is the nucleus. Functionally, ATP-binding component of the Arp2/3 complex, a multiprotein complex that mediates actin polymerization upon stimulation by nucleation-promoting factor (NPF). The Arp2/3 complex mediates the formation of branched actin networks in the cytoplasm, providing the force for cell motility. Seems to contact the pointed end of the daughter actin filament. In podocytes, required for the formation of lamellipodia downstream of AVIL and PLCE1 regulation. In addition to its role in the cytoplasmic cytoskeleton, the Arp2/3 complex also promotes actin polymerization in the nucleus, thereby regulating gene transcription and repair of damaged DNA. The Arp2/3 complex promotes homologous recombination (HR) repair in response to DNA damage by promoting nuclear actin polymerization, leading to drive motility of double-strand breaks (DSBs). Plays a role in ciliogenesis. The protein is Actin-related protein 3 (ACTR3) of Bos taurus (Bovine).